Consider the following 55-residue polypeptide: Large ribosomal subunit protein bL33 (55 aa).

The span at 1–11 (MAKSGRDKIKL) shows a compositional bias: basic and acidic residues. Positions 1–28 (MAKSGRDKIKLESTAGTGHFYTTTKNKR) are disordered. The span at 14 to 24 (TAGTGHFYTTT) shows a compositional bias: polar residues.

It belongs to the bacterial ribosomal protein bL33 family.

This is Large ribosomal subunit protein bL33 from Janthinobacterium sp. (strain Marseille) (Minibacterium massiliensis).